The primary structure comprises 394 residues: Elongation factor Tu 2 (394 aa).

A tr-type G domain is found at 10–204; the sequence is KPHVNVGTIG…ALDSYIPEPE (195 aa). Positions 19 to 26 are G1; sequence GHVDHGKT. Residue 19-26 participates in GTP binding; sequence GHVDHGKT. Thr-26 contacts Mg(2+). The tract at residues 60-64 is G2; it reads GITIN. The interval 81-84 is G3; the sequence is DCPG. Residues 81–85 and 136–139 contribute to the GTP site; these read DCPGH and NKCD. The segment at 136-139 is G4; it reads NKCD. The G5 stretch occupies residues 174–176; sequence SAL.

Belongs to the TRAFAC class translation factor GTPase superfamily. Classic translation factor GTPase family. EF-Tu/EF-1A subfamily. In terms of assembly, monomer.

It localises to the cytoplasm. It carries out the reaction GTP + H2O = GDP + phosphate + H(+). Functionally, GTP hydrolase that promotes the GTP-dependent binding of aminoacyl-tRNA to the A-site of ribosomes during protein biosynthesis. This chain is Elongation factor Tu 2, found in Shewanella loihica (strain ATCC BAA-1088 / PV-4).